Reading from the N-terminus, the 270-residue chain is Phosphatidylglycerol--prolipoprotein diacylglyceryl transferase (270 aa).

4 helical membrane passes run 19-39, 56-76, 92-112, and 116-136; these read FPVY…LWLA, LVLI…VIFE, QGGL…ILFA, and GVSF…GQAI. Arg138 serves as a coordination point for a 1,2-diacyl-sn-glycero-3-phospho-(1'-sn-glycerol). The next 3 membrane-spanning stretches (helical) occupy residues 178 to 198, 206 to 226, and 236 to 256; these read HPTF…LLAL, GELF…VEGL, and LRIA…FIIV.

The protein belongs to the Lgt family.

The protein localises to the cell membrane. The catalysed reaction is L-cysteinyl-[prolipoprotein] + a 1,2-diacyl-sn-glycero-3-phospho-(1'-sn-glycerol) = an S-1,2-diacyl-sn-glyceryl-L-cysteinyl-[prolipoprotein] + sn-glycerol 1-phosphate + H(+). Its pathway is protein modification; lipoprotein biosynthesis (diacylglyceryl transfer). In terms of biological role, catalyzes the transfer of the diacylglyceryl group from phosphatidylglycerol to the sulfhydryl group of the N-terminal cysteine of a prolipoprotein, the first step in the formation of mature lipoproteins. The protein is Phosphatidylglycerol--prolipoprotein diacylglyceryl transferase of Bacillus thuringiensis subsp. konkukian (strain 97-27).